The following is a 101-amino-acid chain: Urease subunit beta (101 aa).

This sequence belongs to the urease beta subunit family. As to quaternary structure, heterotrimer of UreA (gamma), UreB (beta) and UreC (alpha) subunits. Three heterotrimers associate to form the active enzyme.

The protein resides in the cytoplasm. It catalyses the reaction urea + 2 H2O + H(+) = hydrogencarbonate + 2 NH4(+). It participates in nitrogen metabolism; urea degradation; CO(2) and NH(3) from urea (urease route): step 1/1. This is Urease subunit beta from Actinobacillus pleuropneumoniae serotype 5b (strain L20).